Reading from the N-terminus, the 976-residue chain is Protein phosphatase 1 regulatory subunit 12B (976 aa).

A compositionally biased stretch (basic and acidic residues) spans 1–24 (MAELEHLGGKRAESARARRAEQLR). The segment at 1 to 52 (MAELEHLGGKRAESARARRAEQLRRWRGSLTEQEPAERQGAGRQLQTRRGSP) is disordered. Ser29 bears the Phosphoserine mark. ANK repeat units follow at residues 57–86 (EDGA…DINT), 90–119 (DGLT…NVNQ), 123–152 (EGWT…SVGI), 216–245 (SGAT…ELNV), and 249–278 (DGWT…DMDI). A disordered region spans residues 342–489 (EEIPKSQDTE…LDDKDKEREN (148 aa)). Residues 362-374 (SEEEEGEDEVSES) show a composition bias toward acidic residues. Basic and acidic residues predominate over residues 375 to 385 (ETEKEADKKPE). Positions 411–423 (FSASSARRLSSLF) are enriched in low complexity. The residue at position 444 (Thr444) is a Phosphothreonine. Residues 465–477 (SSIYRSSSSPRIS) show a composition bias toward low complexity. Over residues 480–489 (LDDKDKEREN) the composition is skewed to basic and acidic residues. Ser502 carries the post-translational modification Phosphoserine. The interval 503 to 873 (STSDIEEKEN…LTSRVEEDSN (371 aa)) is disordered. Polar residues predominate over residues 538-564 (ETPQTIAPSTYTSTYLKRTPYKSQADS). Over residues 622 to 631 (VRDEEAESLR) the composition is skewed to basic and acidic residues. The span at 632–642 (KARSRQARQTR) shows a compositional bias: basic residues. Thr645 is subject to Phosphothreonine. Over residues 655–679 (EAEKTFSRSRAERQAQEQPGEKLED) the composition is skewed to basic and acidic residues. 2 stretches are compositionally biased toward polar residues: residues 722 to 739 (DKPT…SLYT) and 747 to 763 (SRAS…STHA). Residues 765–777 (AAKEMDTSEKGEA) show a composition bias toward basic and acidic residues. The segment covering 791 to 801 (ERRRAKDRRRG) has biased composition (basic residues). Thr802 is modified (phosphothreonine). Basic and acidic residues predominate over residues 818 to 830 (EEVKEALHERLSR). Ser833 is modified (phosphoserine). Residues 844–860 (YSDRASARARREAREAR) are compositionally biased toward basic and acidic residues. The residue at position 941 (Ser941) is a Phosphoserine.

PP1 comprises a catalytic subunit, PPP1CA, PPP1CB or PPP1CC, and one or several targeting or regulatory subunits. PPP1R12B mediates binding to myosin. Isoform 3 and isoform 4 bind PPP1R12A, but not isoform 1 of PPP1R12B itself. Binds IL16.

It is found in the cytoplasm. Its subcellular location is the cytoskeleton. The protein localises to the stress fiber. Regulates myosin phosphatase activity. Augments Ca(2+) sensitivity of the contractile apparatus. This Mus musculus (Mouse) protein is Protein phosphatase 1 regulatory subunit 12B (Ppp1r12b).